Consider the following 609-residue polypeptide: Kelch domain-containing protein 10 homolog (609 aa).

Residues 103–146 (ASDLDEEEEEEDDDVDVDVDYGDTDSESEFEEMYSDEWTSSSDE) are disordered. The segment covering 104–137 (SDLDEEEEEEDDDVDVDVDYGDTDSESEFEEMYS) has biased composition (acidic residues). Kelch repeat units follow at residues 214-277 (HLYS…IHNN), 279-334 (LISH…IHKH), 335-381 (FLYT…RYRH), 389-437 (HIFV…GNRG), 458-508 (EAFI…HSDN), and 510-554 (CMYV…YNDN). The disordered stretch occupies residues 576–609 (LPPQRRRRLDTSQPDPSMLISLYSNPKRARSSTQ).

Interacts with Elongin-C; may be the substrate recognition component of an E3 ubiquitin ligase complex.

Activates the Pk92B/DASK1-MAPK signaling cascade. The sequence is that of Kelch domain-containing protein 10 homolog (slim) from Drosophila melanogaster (Fruit fly).